Here is a 217-residue protein sequence, read N- to C-terminus: 3,4-dihydroxy-2-butanone 4-phosphate synthase (217 aa).

D-ribulose 5-phosphate contacts are provided by residues 37 to 38, Asp42, 150 to 154, and Glu174; these read RE and RGGHT. Mg(2+) is bound at residue Glu38. His153 lines the Mg(2+) pocket.

The protein belongs to the DHBP synthase family. Homodimer. The cofactor is Mg(2+). Mn(2+) is required as a cofactor.

It catalyses the reaction D-ribulose 5-phosphate = (2S)-2-hydroxy-3-oxobutyl phosphate + formate + H(+). Its pathway is cofactor biosynthesis; riboflavin biosynthesis; 2-hydroxy-3-oxobutyl phosphate from D-ribulose 5-phosphate: step 1/1. Its function is as follows. Catalyzes the conversion of D-ribulose 5-phosphate to formate and 3,4-dihydroxy-2-butanone 4-phosphate. This chain is 3,4-dihydroxy-2-butanone 4-phosphate synthase, found in Cronobacter sakazakii (strain ATCC BAA-894) (Enterobacter sakazakii).